The following is a 399-amino-acid chain: Glucosamine kinase (399 aa).

ATP is bound by residues K98, 149–151, and D156; that span reads EYL. D262 contributes to the D-glucosamine binding site. Mg(2+)-binding residues include Q267, D279, and D281. The short motif at 366 to 381 is the Substrate specificity determinant motif element; sequence QVLREIIYAARHLPRW. Residue E370 participates in D-glucosamine binding.

This sequence belongs to the actinobacterial glucosamine kinase family. In terms of assembly, monomer. Requires Mg(2+) as cofactor.

The enzyme catalyses D-glucosamine + ATP = D-glucosamine 6-phosphate + ADP + H(+). In terms of biological role, catalyzes the ATP-dependent phosphorylation of D-glucosamine (GlcN) to D-glucosamine 6-phosphate. May be involved in the phosphorylation of acquired extracellular GlcN derived from the hydrolysis of chitosan, i.e., in the incorporation of exogenous GlcN into the bacterial GlcNAc metabolism. Is unable to phosphorylate maltose. This is Glucosamine kinase from Mycolicibacterium smegmatis (strain ATCC 700084 / mc(2)155) (Mycobacterium smegmatis).